An 871-amino-acid chain; its full sequence is Synaptonemal complex protein 1 (871 aa).

The disordered stretch occupies residues 1 to 40 (MQKLGFPAMKSLDKPRSLSGSANMYSFSNRKPPDSVSSGS). Positions 18–40 (LSGSANMYSFSNRKPPDSVSSGS) are enriched in polar residues. Coiled coils occupy residues 58–304 (MRTD…DKKN) and 331–608 (LALD…EESK). Disordered regions lie at residues 708–741 (VMSD…RSEH) and 778–871 (SVLS…YAFD). Residues 719-728 (VNSNKNYSIS) show a composition bias toward polar residues. The segment covering 729–741 (KDSRLGGSKRSEH) has biased composition (basic and acidic residues). Residues 831–847 (LTPQSIAKGTGMTSHAR) are compositionally biased toward polar residues.

It is found in the nucleus. In terms of biological role, required for chromosome synapsis and normal fidelity of crossing over. The protein is Synaptonemal complex protein 1 (ZYP1A) of Arabidopsis thaliana (Mouse-ear cress).